The following is a 506-amino-acid chain: Maturase K (506 aa).

This sequence belongs to the intron maturase 2 family. MatK subfamily.

It is found in the plastid. It localises to the chloroplast. Usually encoded in the trnK tRNA gene intron. Probably assists in splicing its own and other chloroplast group II introns. The polypeptide is Maturase K (Arctostaphylos uva-ursi (Bearberry)).